We begin with the raw amino-acid sequence, 297 residues long: Mitochondrial ornithine transporter 1 (297 aa).

Solcar repeat units lie at residues 15 to 97, 102 to 205, and 212 to 292; these read GSPA…LKLT, DPTL…FKKN, and KPHF…FRET. Helical transmembrane passes span 18 to 38, 72 to 91, 107 to 127, 184 to 204, 215 to 235, and 264 to 285; these read ASTF…GYPL, GLTL…FTVY, YFIS…PFEY, HLTR…TFKK, FAYA…VFPV, and IYRG…NFTL.

This sequence belongs to the mitochondrial carrier (TC 2.A.29) family.

Its subcellular location is the mitochondrion inner membrane. Required for arginine biosynthesis. Transports ornithine synthesized from glutamate in the mitochondrial matrix to the cytosol, where it is converted to arginine. The sequence is that of Mitochondrial ornithine transporter 1 from Schizosaccharomyces pombe (strain 972 / ATCC 24843) (Fission yeast).